Here is a 335-residue protein sequence, read N- to C-terminus: Type 1 fimbrin D-mannose specific adhesin (335 aa).

Positions 1–22 (MKIYSALLLAGTALFFTHPALA) are cleaved as a signal peptide.

The protein belongs to the fimbrial protein family.

Its subcellular location is the fimbrium. Functionally, involved in regulation of length and mediation of adhesion of type 1 fimbriae (but not necessary for the production of fimbriae). A mannose-binding adhesin. This is Type 1 fimbrin D-mannose specific adhesin (fimH) from Salmonella typhimurium (strain LT2 / SGSC1412 / ATCC 700720).